Consider the following 89-residue polypeptide: Small ribosomal subunit protein uS15 (89 aa).

This sequence belongs to the universal ribosomal protein uS15 family. As to quaternary structure, part of the 30S ribosomal subunit. Forms a bridge to the 50S subunit in the 70S ribosome, contacting the 23S rRNA.

In terms of biological role, one of the primary rRNA binding proteins, it binds directly to 16S rRNA where it helps nucleate assembly of the platform of the 30S subunit by binding and bridging several RNA helices of the 16S rRNA. Forms an intersubunit bridge (bridge B4) with the 23S rRNA of the 50S subunit in the ribosome. The sequence is that of Small ribosomal subunit protein uS15 from Streptococcus uberis (strain ATCC BAA-854 / 0140J).